Here is a 375-residue protein sequence, read N- to C-terminus: MAGSQIKIPLPKPPDSDSQRLNAFPVIMAQEGKGRLLRQIRLRKILSGDPSDQQITFVNTYGFIRATPETSEFISESSQQKVTPVVTACMLSFGAGPVLEDPQHMLKALDQTDIRVRKTASDKEQILFEINRIPNLFRHHQISADHLIQASSDKYVKSPAKLIAGVNYIYCVTFLSVTVCSASLKFRVARPLLAARSRLVRAVQMEVLLRVTCKKDSQMAKSMLSDPDGEGCIASVWFHLCNLCKGRNKLRSYDENYFASKCRKMNLTVSIGDMWGPTILVHAGGHIPTTAKPFFNSRGWVCHPIHQSSPSLAKTLWSSGCEIKAASAILQGSDYASLAKTDDIIYSKIKVDKDAANYKGVSWSPFRKSASMSNL.

Belongs to the morbillivirus/respirovirus/rubulavirus M protein family.

Its subcellular location is the virion. In terms of biological role, the M protein has a crucial role in virus assembly and interacts with the RNP complex as well as with the viral membrane. In Homo sapiens (Human), this protein is Matrix protein (M).